The primary structure comprises 148 residues: 3-dehydroquinate dehydratase (148 aa).

Tyrosine 23 functions as the Proton acceptor in the catalytic mechanism. Substrate-binding residues include asparagine 75, histidine 81, and aspartate 88. The active-site Proton donor is histidine 101. Residues 102-103 (LS) and arginine 112 each bind substrate.

It belongs to the type-II 3-dehydroquinase family. In terms of assembly, homododecamer.

It catalyses the reaction 3-dehydroquinate = 3-dehydroshikimate + H2O. It participates in metabolic intermediate biosynthesis; chorismate biosynthesis; chorismate from D-erythrose 4-phosphate and phosphoenolpyruvate: step 3/7. Functionally, catalyzes a trans-dehydration via an enolate intermediate. The sequence is that of 3-dehydroquinate dehydratase from Cellvibrio japonicus (strain Ueda107) (Pseudomonas fluorescens subsp. cellulosa).